The chain runs to 608 residues: DNA mismatch repair protein MutL (608 aa).

Positions 363–397 (ASLAMARKPDPPRFHETARPQPDPRHTPGTESVSV) are disordered. Positions 369–390 (RKPDPPRFHETARPQPDPRHTP) are enriched in basic and acidic residues.

This sequence belongs to the DNA mismatch repair MutL/HexB family.

In terms of biological role, this protein is involved in the repair of mismatches in DNA. It is required for dam-dependent methyl-directed DNA mismatch repair. May act as a 'molecular matchmaker', a protein that promotes the formation of a stable complex between two or more DNA-binding proteins in an ATP-dependent manner without itself being part of a final effector complex. This Pelobacter propionicus (strain DSM 2379 / NBRC 103807 / OttBd1) protein is DNA mismatch repair protein MutL.